A 151-amino-acid polypeptide reads, in one-letter code: UPF0756 membrane protein Aflv_0503 (151 aa).

4 helical membrane-spanning segments follow: residues 4–24 (FIFL…SLII), 52–72 (LGVT…KIGF), 85–105 (WIAM…VALL), and 115–135 (LVLG…GPLI).

The protein belongs to the UPF0756 family.

The protein resides in the cell membrane. In Anoxybacillus flavithermus (strain DSM 21510 / WK1), this protein is UPF0756 membrane protein Aflv_0503.